Here is an 85-residue protein sequence, read N- to C-terminus: Large ribosomal subunit protein bL27 (85 aa).

Residues 1–25 form a disordered region; that stretch reads MAHKKAGSSSKNGRDSNPQYLGVKR. A compositionally biased stretch (polar residues) spans 7 to 19; the sequence is GSSSKNGRDSNPQ.

It belongs to the bacterial ribosomal protein bL27 family.

The polypeptide is Large ribosomal subunit protein bL27 (Micrococcus luteus (strain ATCC 4698 / DSM 20030 / JCM 1464 / CCM 169 / CCUG 5858 / IAM 1056 / NBRC 3333 / NCIMB 9278 / NCTC 2665 / VKM Ac-2230) (Micrococcus lysodeikticus)).